Here is a 433-residue protein sequence, read N- to C-terminus: MNVTMHSKKLLKPSIPTPNHLQKLNLSLLDQIQIPFYVGLIFHYETLSDNSDITLSKLESSLSETLTLYYHVAGRYNGTDCVIECNDQGIGYVETAFDVELHQFLLGEESNNLDLLVGLSGFLSETETPPLAAIQLNMFKCGGLVIGAQFNHIIGDMFTMSTFMNSWAKACRVGIKEVAHPTFGLAPLMPSAKVLNIPPPPSFEGVKFVSKRFVFHENALTRLRKEATEEDGDGDDDQKKKRPSRVDLVTAFLSKSLIEMDCAPKELTKSRPSLMVHMMNLRKRTKLALENDVSGNFFIVVNAESKITVAPKITDLTESLGSACGEIISEVAKVDDAEVVSSMVLNSVREFYYEWGKGEKNVFVYSSWCRFPLYEVDFGWGIPSLVDTTAFPFGLIVLMDEAPAGDGIAVRACLSEHDMIQFQQHHQLLSYVS.

Catalysis depends on proton acceptor residues His-152 and Asp-377.

It belongs to the plant acyltransferase family.

The enzyme catalyses benzyl alcohol + acetyl-CoA = benzyl acetate + CoA. It carries out the reaction (E)-cinnamyl alcohol + acetyl-CoA = (E)-cinnamyl acetate + CoA. Involved in the biosynthesis of benzyl acetate, a major constituent of the floral scent. Can use benzylalcohol, cinnamylalcohol, 3-cis-hexene-1-ol or heptanol as substrates. Has some activity with 2-phenylethanol and 2-naphtalene-ethanol. The polypeptide is Acetyl-CoA-benzylalcohol acetyltransferase (BEAT) (Clarkia breweri (Fairy fans)).